Consider the following 132-residue polypeptide: Small ribosomal subunit protein uS8 (132 aa).

It belongs to the universal ribosomal protein uS8 family. Part of the 30S ribosomal subunit. Contacts proteins S5 and S12.

Functionally, one of the primary rRNA binding proteins, it binds directly to 16S rRNA central domain where it helps coordinate assembly of the platform of the 30S subunit. This is Small ribosomal subunit protein uS8 from Baumannia cicadellinicola subsp. Homalodisca coagulata.